Here is a 139-residue protein sequence, read N- to C-terminus: Heat shock protein homolog C338.06c (139 aa).

Residues 27-139 (AWLSCWGPAL…EFTTRIVEIQ (113 aa)) enclose the sHSP domain.

This sequence belongs to the small heat shock protein (HSP20) family.

It localises to the mitochondrion. The chain is Heat shock protein homolog C338.06c from Schizosaccharomyces pombe (strain 972 / ATCC 24843) (Fission yeast).